Reading from the N-terminus, the 293-residue chain is Pyridoxal 5'-phosphate synthase subunit PdxS (293 aa).

Asp-23 contributes to the D-ribose 5-phosphate binding site. Lys-80 (schiff-base intermediate with D-ribose 5-phosphate) is an active-site residue. Gly-152 is a D-ribose 5-phosphate binding site. Arg-164 is a D-glyceraldehyde 3-phosphate binding site. D-ribose 5-phosphate-binding positions include Gly-213 and 234–235; that span reads GS.

It belongs to the PdxS/SNZ family. In terms of assembly, in the presence of PdxT, forms a dodecamer of heterodimers.

The catalysed reaction is aldehydo-D-ribose 5-phosphate + D-glyceraldehyde 3-phosphate + L-glutamine = pyridoxal 5'-phosphate + L-glutamate + phosphate + 3 H2O + H(+). It participates in cofactor biosynthesis; pyridoxal 5'-phosphate biosynthesis. In terms of biological role, catalyzes the formation of pyridoxal 5'-phosphate from ribose 5-phosphate (RBP), glyceraldehyde 3-phosphate (G3P) and ammonia. The ammonia is provided by the PdxT subunit. Can also use ribulose 5-phosphate and dihydroxyacetone phosphate as substrates, resulting from enzyme-catalyzed isomerization of RBP and G3P, respectively. The polypeptide is Pyridoxal 5'-phosphate synthase subunit PdxS (Methanothermobacter thermautotrophicus (strain ATCC 29096 / DSM 1053 / JCM 10044 / NBRC 100330 / Delta H) (Methanobacterium thermoautotrophicum)).